We begin with the raw amino-acid sequence, 133 residues long: ISVHRCLGVLRPLHSLRWGRARYARRVAFAVWVLVLYCQAPVLYFVTTSTRSSRIICHDTSARELFSHFVAYSSVMLSLLFAAPFAVILVCYVLMARRLLKPAYGTSGGLPRAKRKSVRTIAIVLTVFVLCFL.

At 1–26 (ISVHRCLGVLRPLHSLRWGRARYARR) the chain is on the cytoplasmic side. The chain crosses the membrane as a helical span at residues 27 to 47 (VAFAVWVLVLYCQAPVLYFVT). The Extracellular segment spans residues 48–74 (TSTRSSRIICHDTSARELFSHFVAYSS). The chain crosses the membrane as a helical span at residues 75-95 (VMLSLLFAAPFAVILVCYVLM). Residues 96 to 116 (ARRLLKPAYGTSGGLPRAKRK) are Cytoplasmic-facing. A helical transmembrane segment spans residues 117–133 (SVRTIAIVLTVFVLCFL).

It belongs to the G-protein coupled receptor 1 family.

The protein resides in the cell membrane. Functionally, receptor for ATP and UTP coupled to G-proteins that activate a phosphatidylinositol-calcium second messenger system. This Bos taurus (Bovine) protein is P2Y purinoceptor 2 (P2RY2).